Reading from the N-terminus, the 287-residue chain is Urease accessory protein UreD (287 aa).

Belongs to the UreD family. In terms of assembly, ureD, UreF and UreG form a complex that acts as a GTP-hydrolysis-dependent molecular chaperone, activating the urease apoprotein by helping to assemble the nickel containing metallocenter of UreC. The UreE protein probably delivers the nickel.

The protein resides in the cytoplasm. Its function is as follows. Required for maturation of urease via the functional incorporation of the urease nickel metallocenter. This chain is Urease accessory protein UreD, found in Aliivibrio fischeri (strain ATCC 700601 / ES114) (Vibrio fischeri).